The chain runs to 484 residues: 6-phosphogluconate dehydrogenase, decarboxylating (484 aa).

Residues 11–16, 34–36, 76–78, and N104 each bind NADP(+); these read GLAVMG, NRT, and VRA. Substrate contacts are provided by residues N104 and 130 to 132; that span reads SGG. K185 serves as the catalytic Proton acceptor. Position 188 to 189 (188 to 189) interacts with substrate; it reads HN. E192 (proton donor) is an active-site residue. Residues Y193, K262, R289, R447, and H453 each contribute to the substrate site.

This sequence belongs to the 6-phosphogluconate dehydrogenase family. Homodimer.

The catalysed reaction is 6-phospho-D-gluconate + NADP(+) = D-ribulose 5-phosphate + CO2 + NADPH. Its pathway is carbohydrate degradation; pentose phosphate pathway; D-ribulose 5-phosphate from D-glucose 6-phosphate (oxidative stage): step 3/3. Catalyzes the oxidative decarboxylation of 6-phosphogluconate to ribulose 5-phosphate and CO(2), with concomitant reduction of NADP to NADPH. This is 6-phosphogluconate dehydrogenase, decarboxylating (gnd) from Haemophilus ducreyi (strain 35000HP / ATCC 700724).